The chain runs to 705 residues: Elongation factor G (705 aa).

The tr-type G domain maps to 8 to 290 (ERYRNFGIMA…GVVHLLPSPA (283 aa)). Residues 17-24 (AHIDAGKT), 88-92 (DTPGH), and 142-145 (NKMD) each bind GTP. The interval 290–309 (ADRPPVQGIDEDEKEDTRAA) is disordered.

Belongs to the TRAFAC class translation factor GTPase superfamily. Classic translation factor GTPase family. EF-G/EF-2 subfamily.

It is found in the cytoplasm. Functionally, catalyzes the GTP-dependent ribosomal translocation step during translation elongation. During this step, the ribosome changes from the pre-translocational (PRE) to the post-translocational (POST) state as the newly formed A-site-bound peptidyl-tRNA and P-site-bound deacylated tRNA move to the P and E sites, respectively. Catalyzes the coordinated movement of the two tRNA molecules, the mRNA and conformational changes in the ribosome. The protein is Elongation factor G of Xanthomonas euvesicatoria pv. vesicatoria (strain 85-10) (Xanthomonas campestris pv. vesicatoria).